Consider the following 601-residue polypeptide: Potassium-transporting ATPase potassium-binding subunit (601 aa).

The next 12 helical transmembrane spans lie at 3 to 23 (ASAWGLLALFLSVLGLLAWPL), 62 to 82 (HYALALLAFNALGVFAVYALQ), 132 to 152 (LGLSVQNFLSAATGIAVAFAL), 179 to 199 (AWVLVPLSFVLAVFLAGQGVI), 283 to 303 (LTNLAQMLAIFLVPAALCFAF), 314 to 334 (VAILAAMTLMFVVAVVAVTAA), 367 to 387 (FGISASALFAAVTTAASCGAV), 397 to 417 (LGGMVPMVLMQLGEVVFGGAG), 419 to 439 (GLYGMLVFAILAVFIAGLMIG), 459 to 479 (VAILVTPLLVLVGTAVAVLAP), 523 to 543 (VLLALAMWFGRFGVIVPVLAI), and 564 to 584 (GPLFVALLVFTVLLVGLLNYV).

It belongs to the KdpA family. In terms of assembly, the system is composed of three essential subunits: KdpA, KdpB and KdpC.

The protein localises to the cell inner membrane. Functionally, part of the high-affinity ATP-driven potassium transport (or Kdp) system, which catalyzes the hydrolysis of ATP coupled with the electrogenic transport of potassium into the cytoplasm. This subunit binds the periplasmic potassium ions and delivers the ions to the membrane domain of KdpB through an intramembrane tunnel. In Paracidovorax citrulli (strain AAC00-1) (Acidovorax citrulli), this protein is Potassium-transporting ATPase potassium-binding subunit.